A 218-amino-acid polypeptide reads, in one-letter code: MADEVILLDFWPSPFGVRARIALREKGVEFEYREENLRDKSPLLLQMNPVHKKIPVLIHNGKPVCESMNVVQYIDEVWSDKNPILPSDPYQRAQARFWVDFVDTKLFEPADKIWQTKGEEQETAKKEYIEALKILETELGDKPYFGGDTFGFVDIAMTGYYSWFEASEKLANFSIEPECPTLMASAKRCLQRESVVQSLHDSEKILAFAYKIRKIYCV.

A2 carries the post-translational modification N-acetylalanine. The GST N-terminal domain occupies 3–82 (DEVILLDFWP…YIDEVWSDKN (80 aa)). Residues 13 to 14 (SP), 39 to 40 (DK), 53 to 54 (KI), and 66 to 67 (ES) each bind glutathione. The GST C-terminal domain maps to 88–208 (DPYQRAQARF…LHDSEKILAF (121 aa)). Position 149 is a phosphothreonine (T149).

This sequence belongs to the GST superfamily. Tau family.

The protein resides in the cytoplasm. Its subcellular location is the cytosol. It catalyses the reaction RX + glutathione = an S-substituted glutathione + a halide anion + H(+). Functionally, may be involved in the conjugation of reduced glutathione to a wide number of exogenous and endogenous hydrophobic electrophiles and have a detoxification role against certain herbicides. This chain is Glutathione S-transferase U22 (GSTU22), found in Arabidopsis thaliana (Mouse-ear cress).